Here is a 148-residue protein sequence, read N- to C-terminus: Glutamyl-tRNA(Gln) amidotransferase subunit C, mitochondrial (148 aa).

The transit peptide at 1–10 (MLRLLNKRFY) directs the protein to the mitochondrion.

This sequence belongs to the GatC family. In terms of assembly, subunit of the heterotrimeric GatCAB amidotransferase (AdT) complex, composed of A, B and C subunits.

It localises to the mitochondrion. The enzyme catalyses L-glutamyl-tRNA(Gln) + L-glutamine + ATP + H2O = L-glutaminyl-tRNA(Gln) + L-glutamate + ADP + phosphate + H(+). Functionally, allows the formation of correctly charged Gln-tRNA(Gln) through the transamidation of misacylated Glu-tRNA(Gln) in the mitochondria. The reaction takes place in the presence of glutamine and ATP through an activated gamma-phospho-Glu-tRNA(Gln). This chain is Glutamyl-tRNA(Gln) amidotransferase subunit C, mitochondrial, found in Drosophila ananassae (Fruit fly).